A 191-amino-acid chain; its full sequence is MKSLRLMLCAMPLMLTGCSTMSSVNWSAANPWNWFGSSTKVSEQGVGELTASTPLQEQAIADALDGDYRLRSGMKTANGNVVRFFEVMKGDNVAMVINGDQGTISRIDVLDSDIPADTGVKIGTPFSDLYSKAFGNCQKADGDDNRAVECKAEGSQHISYQFSGEWRGPEGLMPSDDTLKNWKVSKIIWRR.

A signal peptide spans 1-22; sequence MKSLRLMLCAMPLMLTGCSTMS.

This is an uncharacterized protein from Escherichia coli (strain K12).